The primary structure comprises 210 residues: Calcium-activated potassium channel subunit beta-4 (210 aa).

At 1–19 (MAKLRVSYEYTEAEDKSIR) the chain is on the cytoplasmic side. Residues 20-40 (LGLFLIVSGILSLFIFGFCWL) traverse the membrane as a helical segment. Over 41–167 (SPALQDLQAT…DVLLQRTHDE (127 aa)) the chain is Extracellular. N-linked (GlcNAc...) asparagine glycosylation is found at asparagine 53 and asparagine 90. The chain crosses the membrane as a helical span at residues 168-188 (IVLLHCFLWPVVAFVVGVLIV). Topologically, residues 189 to 210 (VLTICAKSLAVKAEAMKKRKFS) are cytoplasmic.

This sequence belongs to the KCNMB (TC 8.A.14.1) family. KCNMB4 subfamily. Interacts with KCNMA1 tetramer. There are probably 4 molecules of KCMNB4 per KCNMA1 tetramer. Interacts with FMR1 (via N-terminus). Phosphorylated. Phosphorylation modulates its effect on KCNMA1 activation kinetics. Post-translationally, N-glycosylated. A highly glycosylated form is promoted by KCNMA1. Glycosylation, which is not required for the interaction with KCNMA1 and subcellular location, increases protection against charybdotoxin.

Its subcellular location is the membrane. Regulatory subunit of the calcium activated potassium KCNMA1 (maxiK) channel. Modulates the calcium sensitivity and gating kinetics of KCNMA1, thereby contributing to KCNMA1 channel diversity. Decreases the gating kinetics and calcium sensitivity of the KCNMA1 channel, but with fast deactivation kinetics. May decrease KCNMA1 channel openings at low calcium concentrations but increases channel openings at high calcium concentrations. Makes KCNMA1 channel resistant to 100 nM charybdotoxin (CTX) toxin concentrations. The chain is Calcium-activated potassium channel subunit beta-4 (Kcnmb4) from Rattus norvegicus (Rat).